Here is a 557-residue protein sequence, read N- to C-terminus: MNNRLDNNRTIRAPHGDKISAKSWQTEAAKRMLMNNLDPDVAEHPHALVVYGGIGRAARDWPSYDKIIATLDRLEDDETLLVQSGKPVGVFKTHSNAPRVLIANSNLVPHWANWEHFNELDKKGLMMYGQMTAGSWIYIGSQGIVQGTYETFVAMAKQHFAGSAKGKWVLTGGLGGMGGAQPLAATMAGFCALVVECDETRIDFRIKTGYVDIKANNLEHALQLITNACVKGDALSVGLLGNAADVFSTLVKSGVTPDVVTDQTSAHDPLNGYLPQGWSMEHAAKMREQDPKAVVTAAKQSMAVQVRAMLALQQAGAATTDYGNNIRQMAFDEGVTNAFDFPGFVPAYIRPLFCEGIGPFRWVALSGDPEDIYKTDAKVKELIPDDAHLHNWLDMARKRIQFQGLPARICWVGLKDRARLALAFNNMVKNGELKAPVVIGRDHLDSGSVASPNRETEAMLDGSDAVSDWPLLNALLNTASGATWVSLHHGGGVGMGFSQHAGVVIVADGSDEAKQRIARVLWNDPATGVMRHADAGYDIAKNCAKEQNLDLPMLNEE.

NAD(+) contacts are provided by residues 52 to 53 (GG), glutamine 130, 176 to 178 (GMG), glutamate 196, arginine 201, 242 to 243 (NA), 263 to 267 (QTSAH), 273 to 274 (YL), and tyrosine 322. Cysteine 410 is an active-site residue. Residue glycine 492 coordinates NAD(+).

Belongs to the urocanase family. Requires NAD(+) as cofactor.

It is found in the cytoplasm. It carries out the reaction 4-imidazolone-5-propanoate = trans-urocanate + H2O. It participates in amino-acid degradation; L-histidine degradation into L-glutamate; N-formimidoyl-L-glutamate from L-histidine: step 2/3. Its function is as follows. Catalyzes the conversion of urocanate to 4-imidazolone-5-propionate. The protein is Urocanate hydratase of Pseudoalteromonas translucida (strain TAC 125).